The primary structure comprises 227 residues: Small heat shock protein hspG3 (227 aa).

One can recognise a sHSP domain in the interval 31-227 (NKRVDIIPSM…SSNTIKININ (197 aa)). Positions 119–164 (QQQQLENSNKENDEPSIEEFEEDVKSKSELNKTTLNTTENKDEDKT) are disordered.

It belongs to the small heat shock protein (HSP20) family.

This chain is Small heat shock protein hspG3 (hspG3), found in Dictyostelium discoideum (Social amoeba).